We begin with the raw amino-acid sequence, 425 residues long: Glutamate-1-semialdehyde 2,1-aminomutase (425 aa).

Lysine 265 is modified (N6-(pyridoxal phosphate)lysine).

The protein belongs to the class-III pyridoxal-phosphate-dependent aminotransferase family. HemL subfamily. As to quaternary structure, homodimer. It depends on pyridoxal 5'-phosphate as a cofactor.

The protein resides in the cytoplasm. It carries out the reaction (S)-4-amino-5-oxopentanoate = 5-aminolevulinate. The protein operates within porphyrin-containing compound metabolism; protoporphyrin-IX biosynthesis; 5-aminolevulinate from L-glutamyl-tRNA(Glu): step 2/2. This chain is Glutamate-1-semialdehyde 2,1-aminomutase, found in Psychromonas ingrahamii (strain DSM 17664 / CCUG 51855 / 37).